Here is a 114-residue protein sequence, read N- to C-terminus: Nucleoid-associated protein MAE_23910 (114 aa).

This sequence belongs to the YbaB/EbfC family. As to quaternary structure, homodimer.

The protein localises to the cytoplasm. It localises to the nucleoid. In terms of biological role, binds to DNA and alters its conformation. May be involved in regulation of gene expression, nucleoid organization and DNA protection. The sequence is that of Nucleoid-associated protein MAE_23910 from Microcystis aeruginosa (strain NIES-843 / IAM M-2473).